Reading from the N-terminus, the 319-residue chain is Aliphatic sulfonates import ATP-binding protein SsuB 1 (319 aa).

Residues 63–282 (VTLSGVSKRF…ARASAAFAAL (220 aa)) enclose the ABC transporter domain. An ATP-binding site is contributed by 95-102 (GRSGCGKS).

This sequence belongs to the ABC transporter superfamily. Aliphatic sulfonates importer (TC 3.A.1.17.2) family. In terms of assembly, the complex is composed of two ATP-binding proteins (SsuB), two transmembrane proteins (SsuC) and a solute-binding protein (SsuA).

The protein localises to the cell inner membrane. It carries out the reaction ATP + H2O + aliphatic sulfonate-[sulfonate-binding protein]Side 1 = ADP + phosphate + aliphatic sulfonateSide 2 + [sulfonate-binding protein]Side 1.. Part of the ABC transporter complex SsuABC involved in aliphatic sulfonates import. Responsible for energy coupling to the transport system. The polypeptide is Aliphatic sulfonates import ATP-binding protein SsuB 1 (Burkholderia cenocepacia (strain HI2424)).